A 203-amino-acid polypeptide reads, in one-letter code: NAD(P)H dehydrogenase (quinone) (203 aa).

Residues 3-194 enclose the Flavodoxin-like domain; the sequence is VLIPFYSMYG…AGARYQGKYI (192 aa). Residues 9-14 and 82-84 each bind FMN; these read SMYGHI and TRF. Tyr-11 lines the NAD(+) pocket. A substrate-binding site is contributed by Trp-102. FMN contacts are provided by residues 117 to 123 and His-138; that span reads SSATQHG.

This sequence belongs to the WrbA family. It depends on FMN as a cofactor.

The enzyme catalyses a quinone + NADH + H(+) = a quinol + NAD(+). It carries out the reaction a quinone + NADPH + H(+) = a quinol + NADP(+). In Geobacter metallireducens (strain ATCC 53774 / DSM 7210 / GS-15), this protein is NAD(P)H dehydrogenase (quinone).